The primary structure comprises 513 residues: Maturase K (513 aa).

Belongs to the intron maturase 2 family. MatK subfamily.

It localises to the plastid. Its subcellular location is the chloroplast. Functionally, usually encoded in the trnK tRNA gene intron. Probably assists in splicing its own and other chloroplast group II introns. The protein is Maturase K of Pinus parviflora (Japanese white pine).